A 458-amino-acid chain; its full sequence is UDP-N-acetylglucosamine 1-carboxyvinyltransferase (458 aa).

34-35 contacts phosphoenolpyruvate; the sequence is KN. Position 104 (R104) interacts with UDP-N-acetyl-alpha-D-glucosamine. The active-site Proton donor is the C128. Residue C128 is modified to 2-(S-cysteinyl)pyruvic acid O-phosphothioketal. Positions 320 and 342 each coordinate UDP-N-acetyl-alpha-D-glucosamine.

Belongs to the EPSP synthase family. MurA subfamily.

Its subcellular location is the cytoplasm. The enzyme catalyses phosphoenolpyruvate + UDP-N-acetyl-alpha-D-glucosamine = UDP-N-acetyl-3-O-(1-carboxyvinyl)-alpha-D-glucosamine + phosphate. It participates in cell wall biogenesis; peptidoglycan biosynthesis. Its function is as follows. Cell wall formation. Adds enolpyruvyl to UDP-N-acetylglucosamine. The polypeptide is UDP-N-acetylglucosamine 1-carboxyvinyltransferase (Prochlorococcus marinus (strain NATL1A)).